Consider the following 365-residue polypeptide: Probable protein kinase At2g41970 (365 aa).

The disordered stretch occupies residues Met-1–Pro-50. The Protein kinase domain maps to Phe-73 to Leu-354. ATP contacts are provided by residues Ile-79–Val-87 and Lys-100. Residue Tyr-146 is modified to Phosphotyrosine. Asp-204 serves as the catalytic Proton acceptor. Phosphoserine is present on residues Ser-208 and Ser-238. Phosphothreonine occurs at positions 239 and 244. The residue at position 252 (Tyr-252) is a Phosphotyrosine.

It belongs to the protein kinase superfamily. Tyr protein kinase family.

The protein is Probable protein kinase At2g41970 of Arabidopsis thaliana (Mouse-ear cress).